The chain runs to 523 residues: Glutamate--cysteine ligase (523 aa).

This sequence belongs to the glutamate--cysteine ligase type 1 family. Type 1 subfamily.

It carries out the reaction L-cysteine + L-glutamate + ATP = gamma-L-glutamyl-L-cysteine + ADP + phosphate + H(+). Its pathway is sulfur metabolism; glutathione biosynthesis; glutathione from L-cysteine and L-glutamate: step 1/2. The polypeptide is Glutamate--cysteine ligase (Shewanella oneidensis (strain ATCC 700550 / JCM 31522 / CIP 106686 / LMG 19005 / NCIMB 14063 / MR-1)).